The chain runs to 353 residues: tRNA N6-adenosine threonylcarbamoyltransferase (353 aa).

Fe cation contacts are provided by H119 and H123. Substrate is bound by residues 145–149 (LVSGG), D178, G191, and N285. D313 provides a ligand contact to Fe cation.

This sequence belongs to the KAE1 / TsaD family. The cofactor is Fe(2+).

The protein localises to the cytoplasm. It carries out the reaction L-threonylcarbamoyladenylate + adenosine(37) in tRNA = N(6)-L-threonylcarbamoyladenosine(37) in tRNA + AMP + H(+). Its function is as follows. Required for the formation of a threonylcarbamoyl group on adenosine at position 37 (t(6)A37) in tRNAs that read codons beginning with adenine. Is involved in the transfer of the threonylcarbamoyl moiety of threonylcarbamoyl-AMP (TC-AMP) to the N6 group of A37, together with TsaE and TsaB. TsaD likely plays a direct catalytic role in this reaction. The protein is tRNA N6-adenosine threonylcarbamoyltransferase of Magnetococcus marinus (strain ATCC BAA-1437 / JCM 17883 / MC-1).